The chain runs to 554 residues: Transcription factor 7-like 1-A (554 aa).

Positions 1–11 (MPQLNSGGGDE) are enriched in gly residues. An interaction with CTNNB1-A region spans residues 1 to 61 (MPQLNSGGGD…SENHSSDSDS (61 aa)). 3 disordered regions span residues 1–73 (MPQL…REAF), 183–213 (GTPPGHLSPEIDPKTGIPRPPHPSELSPYYP), and 391–475 (WSAR…LTTK). Composition is skewed to basic and acidic residues over residues 17-32 (ELIRFKDEGEQEEKSP) and 52-73 (SENHSSDSDSEVERRPPPREAF). The interaction with AES and TLE4-A stretch occupies residues 109–312 (LGGHYLPNGA…SPNLHTKSNM (204 aa)). The HMG box DNA-binding region spans 324-392 (IKKPLNAFML…LHSQLYPSWS (69 aa)). Over residues 407 to 416 (KQSPEMETHT) the composition is skewed to basic and acidic residues. Positions 408-554 (QSPEMETHTK…PLSLVTKSSD (147 aa)) are interaction with CTBP-B. A compositionally biased stretch (low complexity) spans 445–464 (SPATPSAALASPAAPAATHS). Positions 465-474 (EQAQPLSLTT) are enriched in polar residues.

Belongs to the TCF/LEF family. Interacts with csnk1e, ctnnb1-A, ctbp-B, dact1-A and gsk3b. May interact with ase and tle4-A. In terms of processing, phosphorylated. Phosphorylation by csnk1e promotes binding to ctnnb1-A while phosphorylation by gsk3b may reverse this effect.

It is found in the cytoplasm. Its subcellular location is the nucleus. Its function is as follows. Participates in the Wnt signaling pathway. Binds to DNA and acts as a repressor in the absence of ctnnb1-A and possibly ctnnb1-B, and as an activator in the presence of these proteins. Required early in development for the establishment of the dorsal body axis in response to maternal Wnt signaling. Also required during development of the CNS for the establishment of dorsal-ventral patterning in the prospective diencephalon. This is Transcription factor 7-like 1-A (tcf7l1-a) from Xenopus laevis (African clawed frog).